The following is a 78-amino-acid chain: Acyl carrier protein (78 aa).

The 76-residue stretch at 2–77 (STIEERVKKI…AAIDFINANQ (76 aa)) folds into the Carrier domain. S37 is modified (O-(pantetheine 4'-phosphoryl)serine).

The protein belongs to the acyl carrier protein (ACP) family. 4'-phosphopantetheine is transferred from CoA to a specific serine of apo-ACP by AcpS. This modification is essential for activity because fatty acids are bound in thioester linkage to the sulfhydryl of the prosthetic group.

Its subcellular location is the cytoplasm. It participates in lipid metabolism; fatty acid biosynthesis. In terms of biological role, carrier of the growing fatty acid chain in fatty acid biosynthesis. The chain is Acyl carrier protein from Yersinia pseudotuberculosis serotype O:1b (strain IP 31758).